The sequence spans 259 residues: 5'-nucleotidase SurE (259 aa).

A divalent metal cation-binding residues include aspartate 8, aspartate 9, serine 40, and asparagine 92.

The protein belongs to the SurE nucleotidase family. It depends on a divalent metal cation as a cofactor.

The protein localises to the cytoplasm. It catalyses the reaction a ribonucleoside 5'-phosphate + H2O = a ribonucleoside + phosphate. Its function is as follows. Nucleotidase that shows phosphatase activity on nucleoside 5'-monophosphates. This is 5'-nucleotidase SurE from Xanthomonas euvesicatoria pv. vesicatoria (strain 85-10) (Xanthomonas campestris pv. vesicatoria).